Reading from the N-terminus, the 157-residue chain is Small ribosomal subunit protein uS7 (157 aa).

It belongs to the universal ribosomal protein uS7 family. Part of the 30S ribosomal subunit. Contacts proteins S9 and S11.

One of the primary rRNA binding proteins, it binds directly to 16S rRNA where it nucleates assembly of the head domain of the 30S subunit. Is located at the subunit interface close to the decoding center, probably blocks exit of the E-site tRNA. The chain is Small ribosomal subunit protein uS7 from Paracidovorax citrulli (strain AAC00-1) (Acidovorax citrulli).